Here is a 285-residue protein sequence, read N- to C-terminus: Small ribosomal subunit protein uS3 (285 aa).

Positions 39 to 107 (VREFLKKKLK…PVAVNIEEVR (69 aa)) constitute a KH type-2 domain. Residues 211–285 (GDAPVMRGED…RAAPPAAKGE (75 aa)) are disordered. A compositionally biased stretch (basic and acidic residues) spans 217–241 (RGEDRPEDDRRRRNPRGDRPGDRRG). Residues 242 to 255 (PGAGRGGPGAGRGP) show a composition bias toward gly residues. Low complexity-rich tracts occupy residues 256-267 (ADGASAAPSGDA) and 276-285 (RAAPPAAKGE).

The protein belongs to the universal ribosomal protein uS3 family. In terms of assembly, part of the 30S ribosomal subunit. Forms a tight complex with proteins S10 and S14.

Functionally, binds the lower part of the 30S subunit head. Binds mRNA in the 70S ribosome, positioning it for translation. The chain is Small ribosomal subunit protein uS3 from Leptothrix cholodnii (strain ATCC 51168 / LMG 8142 / SP-6) (Leptothrix discophora (strain SP-6)).